Consider the following 207-residue polypeptide: Large ribosomal subunit protein uL4 (207 aa).

Belongs to the universal ribosomal protein uL4 family. As to quaternary structure, part of the 50S ribosomal subunit.

Functionally, one of the primary rRNA binding proteins, this protein initially binds near the 5'-end of the 23S rRNA. It is important during the early stages of 50S assembly. It makes multiple contacts with different domains of the 23S rRNA in the assembled 50S subunit and ribosome. Forms part of the polypeptide exit tunnel. In Geobacter metallireducens (strain ATCC 53774 / DSM 7210 / GS-15), this protein is Large ribosomal subunit protein uL4.